The primary structure comprises 189 residues: Chitin synthase 1 (189 aa).

This sequence belongs to the chitin synthase family. Class I subfamily.

Its subcellular location is the cell membrane. It carries out the reaction [(1-&gt;4)-N-acetyl-beta-D-glucosaminyl](n) + UDP-N-acetyl-alpha-D-glucosamine = [(1-&gt;4)-N-acetyl-beta-D-glucosaminyl](n+1) + UDP + H(+). Polymerizes chitin, a structural polymer of the cell wall and septum, by transferring the sugar moiety of UDP-GlcNAc to the non-reducing end of the growing chitin polymer. This Aspergillus niger protein is Chitin synthase 1 (chs1).